Consider the following 189-residue polypeptide: Testis-expressed protein 22 (189 aa).

Residues 1–120 (MDSRQQRPQR…TQSVPTPPLQ (120 aa)) form a disordered region. The span at 14–24 (QWQLAQEQRQQ) shows a compositional bias: low complexity. The segment covering 70 to 87 (IDERRRLALQRMQERTDT) has biased composition (basic and acidic residues). Low complexity predominate over residues 103–114 (QQTETSPSTQSV).

Mainly expressed in spermatocytes and spermatids in testis.

It localises to the cytoplasm. The protein localises to the cytoplasmic vesicle. It is found in the secretory vesicle. Its subcellular location is the acrosome. In Mus musculus (Mouse), this protein is Testis-expressed protein 22 (Tex22).